Consider the following 257-residue polypeptide: NAD-capped RNA hydrolase NudC (257 aa).

Substrate contacts are provided by lysine 25 and arginine 69. Cysteine 98 and cysteine 101 together coordinate Zn(2+). Residue glutamate 111 participates in substrate binding. Zn(2+) contacts are provided by cysteine 116 and cysteine 119. Tyrosine 124 contributes to the substrate binding site. The 124-residue stretch at 125-248 (PQIAPCIIVA…TVARRLIEDT (124 aa)) folds into the Nudix hydrolase domain. Residues alanine 158, glutamate 174, and glutamate 178 each coordinate a divalent metal cation. The Nudix box signature appears at 159–180 (GFVEVGETLEQAVAREVMEESG). 192–199 (QPWPFPQS) is a substrate binding site. Residue glutamate 219 participates in a divalent metal cation binding. Alanine 241 is a substrate binding site.

The protein belongs to the Nudix hydrolase family. NudC subfamily. As to quaternary structure, homodimer. Mg(2+) serves as cofactor. The cofactor is Mn(2+). It depends on Zn(2+) as a cofactor.

It carries out the reaction a 5'-end NAD(+)-phospho-ribonucleoside in mRNA + H2O = a 5'-end phospho-adenosine-phospho-ribonucleoside in mRNA + beta-nicotinamide D-ribonucleotide + 2 H(+). The catalysed reaction is NAD(+) + H2O = beta-nicotinamide D-ribonucleotide + AMP + 2 H(+). The enzyme catalyses NADH + H2O = reduced beta-nicotinamide D-ribonucleotide + AMP + 2 H(+). Its function is as follows. mRNA decapping enzyme that specifically removes the nicotinamide adenine dinucleotide (NAD) cap from a subset of mRNAs by hydrolyzing the diphosphate linkage to produce nicotinamide mononucleotide (NMN) and 5' monophosphate mRNA. The NAD-cap is present at the 5'-end of some mRNAs and stabilizes RNA against 5'-processing. Has preference for mRNAs with a 5'-end purine. Catalyzes the hydrolysis of a broad range of dinucleotide pyrophosphates. This Escherichia coli O127:H6 (strain E2348/69 / EPEC) protein is NAD-capped RNA hydrolase NudC.